The sequence spans 3114 residues: Centromere protein F (3114 aa).

Residues 1–481 are interaction with SNAP25 and required for localization to the cytoplasm; it reads MSWALEEWKE…IKENELRRSM (481 aa). A coiled-coil region spans residues 13–131; the sequence is PTRALQKIQE…KSELERSQQA (119 aa). S106 carries the post-translational modification Phosphoserine. Residues T144, T151, and T154 each carry the phosphothreonine modification. Y158 carries the phosphotyrosine modification. Over residues 211-235 the composition is skewed to polar residues; sequence QASSSVFSWQQEKTPSHLSSNSQRT. Residues 211-236 form a disordered region; that stretch reads QASSSVFSWQQEKTPSHLSSNSQRTP. 2 positions are modified to phosphoserine: S242 and S276. The stretch at 280–685 forms a coiled coil; it reads LDQLKAQNQE…SVEIRNLHNV (406 aa). A phosphoserine mark is found at S773, S783, S821, S834, S838, and S876. 2 coiled-coil regions span residues 899-989 and 1196-1244; these read VAET…LNQE and LEVK…IRGD. A phosphoserine mark is found at S1248, S1255, and S1259. Residues 1549–1646 adopt a coiled-coil conformation; sequence VEELESLCEV…ELEVARLQLQ (98 aa). 3 positions are modified to phosphoserine: S1651, S1652, and S1654. Disordered regions lie at residues 1667 to 1690 and 1710 to 1746; these read RNES…KHDV and TETG…SECI. Residues 1669–1690 are compositionally biased toward basic and acidic residues; the sequence is ESCDISKEHTSETTERTPKHDV. S1726 is modified (phosphoserine). Phosphothreonine is present on T1862. Phosphoserine is present on residues S1868 and S1892. Coiled coils occupy residues 1890 to 2078 and 2107 to 2891; these read NDSW…LQAR and LSST…LCSQ. The tract at residues 2026–2351 is interaction with NDE1 and NDEL1; that stretch reads LLKDKTHLQE…ERELEIARTN (326 aa). 2 repeat units span residues 2111-2290 and 2293-2472. Residues 2111 to 2472 form a 2 X 177 AA tandem repeats region; sequence QEEVHQLRRG…ACKAKEQNLS (362 aa). A sufficient for self-association region spans residues 2392-2829; sequence SEKENLTNEL…QAAQEKQKTG (438 aa). The sufficient for centromere localization stretch occupies residues 2392–3017; that stretch reads SEKENLTNEL…ATRTSPRLAA (626 aa). Phosphoserine is present on residues S2416 and S2417. Position 2779 is an N6-acetyllysine (K2779). Residues 2831 to 3017 are sufficient for nuclear localization; that stretch reads VMDTKVDELT…ATRTSPRLAA (187 aa). A disordered region spans residues 2891–2977; sequence QQSKQDSRGS…AEDTEGTEFE (87 aa). 4 positions are modified to phosphoserine: S2900, S2911, S2922, and S2936. The short motif at 2919 to 2936 is the Nuclear localization signal element; that stretch reads KRLSSGQNKASGKRQRSS. T2949 carries the phosphothreonine modification. A phosphoserine mark is found at S2952, S2998, S3023, and S3026. The segment at 3024–3114 is disordered; sequence PLSLGKENLA…SNGSENCKVQ (91 aa). The segment covering 3033–3045 has biased composition (polar residues); that stretch reads AESSKPTAGGSRS. Phosphoserine occurs at positions 3054, 3079, and 3083. The span at 3079 to 3089 shows a compositional bias: basic and acidic residues; that stretch reads SPTDSPREGLR. Residues 3105-3114 show a composition bias toward polar residues; it reads SNGSENCKVQ. The residue at position 3111 (C3111) is a Cysteine methyl ester. C3111 carries the S-farnesyl cysteine lipid modification. The propeptide at 3112–3114 is removed in mature form; that stretch reads KVQ.

It belongs to the centromere protein F family. As to quaternary structure, interacts with and STX4 (via C-terminus). Interacts (via N-terminus) with RBL1, RBL2 and SNAP25. Self-associates. Interacts with CENP-E and BUBR1 (via C-terminus). Interacts (via C-terminus) with NDE1, NDEL1 and RB1. Hyperphosphorylated during mitosis.

Its subcellular location is the cytoplasm. The protein localises to the perinuclear region. It is found in the nucleus matrix. It localises to the chromosome. The protein resides in the centromere. Its subcellular location is the kinetochore. The protein localises to the cytoskeleton. It is found in the spindle. Functionally, required for kinetochore function and chromosome segregation in mitosis. Required for kinetochore localization of dynein, LIS1, NDE1 and NDEL1. Regulates recycling of the plasma membrane by acting as a link between recycling vesicles and the microtubule network though its association with STX4 and SNAP25. Acts as a potential inhibitor of pocket protein-mediated cellular processes during development by regulating the activity of RB proteins during cell division and proliferation. May play a regulatory or permissive role in the normal embryonic cardiomyocyte cell cycle and in promoting continued mitosis in transformed, abnormally dividing neonatal cardiomyocytes. Interaction with RB directs embryonic stem cells toward a cardiac lineage. Involved in the regulation of DNA synthesis and hence cell cycle progression, via its C-terminus. Has a potential role regulating skeletal myogenesis and in cell differentiation in embryogenesis. Involved in dendritic cell regulation of T-cell immunity against chlamydia. This chain is Centromere protein F (CENPF), found in Homo sapiens (Human).